The sequence spans 764 residues: FAST kinase domain-containing protein 5, mitochondrial (764 aa).

Residues 1 to 27 (MAATLKSLKLVRYRAFCSPSAFGAVRS) constitute a mitochondrion transit peptide. Phosphoserine is present on Ser-95. The residue at position 507 (Lys-507) is an N6-acetyllysine. Positions 697-757 (LAVQFTNRNQ…RLEKLAFLHE (61 aa)) constitute an RAP domain.

Belongs to the FAST kinase family. As to quaternary structure, found in a complex with GRSF1, DDX28, DHX30 and FASTKD2. Associates with the 12S mitochondrial rRNA (12S mt-rRNA). In terms of tissue distribution, expression detected in spleen, thymus, testis, ovary, colon, heart, smooth muscle, kidney, brain, lung, liver and white adipose tissue with highest expression in heart, smooth muscle, liver and thyroid.

It is found in the mitochondrion matrix. The protein resides in the mitochondrion nucleoid. Its function is as follows. Plays an important role in the processing of non-canonical mitochondrial mRNA precursors. The chain is FAST kinase domain-containing protein 5, mitochondrial (FASTKD5) from Homo sapiens (Human).